The sequence spans 53 residues: UPF0391 membrane protein Bcen2424_6479 (53 aa).

2 helical membrane-spanning segments follow: residues 5 to 25 (AIIF…GIAA) and 30 to 50 (IAKI…LLGV).

This sequence belongs to the UPF0391 family.

It is found in the cell membrane. The protein is UPF0391 membrane protein Bcen2424_6479 of Burkholderia cenocepacia (strain HI2424).